Reading from the N-terminus, the 186-residue chain is ATP synthase subunit delta (186 aa).

This sequence belongs to the ATPase delta chain family. In terms of assembly, F-type ATPases have 2 components, F(1) - the catalytic core - and F(0) - the membrane proton channel. F(1) has five subunits: alpha(3), beta(3), gamma(1), delta(1), epsilon(1). CF(0) has four main subunits: a(1), b(1), b'(1) and c(10-14). The alpha and beta chains form an alternating ring which encloses part of the gamma chain. F(1) is attached to F(0) by a central stalk formed by the gamma and epsilon chains, while a peripheral stalk is formed by the delta, b and b' chains.

It localises to the cell inner membrane. Its function is as follows. F(1)F(0) ATP synthase produces ATP from ADP in the presence of a proton or sodium gradient. F-type ATPases consist of two structural domains, F(1) containing the extramembraneous catalytic core and F(0) containing the membrane proton channel, linked together by a central stalk and a peripheral stalk. During catalysis, ATP synthesis in the catalytic domain of F(1) is coupled via a rotary mechanism of the central stalk subunits to proton translocation. In terms of biological role, this protein is part of the stalk that links CF(0) to CF(1). It either transmits conformational changes from CF(0) to CF(1) or is implicated in proton conduction. The protein is ATP synthase subunit delta of Bradyrhizobium sp. (strain BTAi1 / ATCC BAA-1182).